A 341-amino-acid chain; its full sequence is Glyceraldehyde-3-phosphate dehydrogenase 4 (341 aa).

NAD(+) contacts are provided by residues 13 to 14 (RI), Asp-35, and Lys-85. D-glyceraldehyde 3-phosphate-binding positions include 157–159 (SCT), Thr-188, 217–218 (TG), and Arg-240. The Nucleophile role is filled by Cys-158. Residue Asn-322 coordinates NAD(+).

The protein belongs to the glyceraldehyde-3-phosphate dehydrogenase family. In terms of assembly, homotetramer.

Its subcellular location is the cytoplasm. It catalyses the reaction D-glyceraldehyde 3-phosphate + phosphate + NAD(+) = (2R)-3-phospho-glyceroyl phosphate + NADH + H(+). The protein operates within carbohydrate degradation; glycolysis; pyruvate from D-glyceraldehyde 3-phosphate: step 1/5. The protein is Glyceraldehyde-3-phosphate dehydrogenase 4 (gpd-4) of Caenorhabditis elegans.